The sequence spans 382 residues: Dual-specificity RNA methyltransferase RlmN (382 aa).

Glu96 serves as the catalytic Proton acceptor. Residues 102–342 enclose the Radical SAM core domain; the sequence is QGKRGTLCVS…VRTTRGEDID (241 aa). An intrachain disulfide couples Cys109 to Cys345. Cys116, Cys120, and Cys123 together coordinate [4Fe-4S] cluster. S-adenosyl-L-methionine-binding positions include 170–171, Ser202, 224–226, and Asn302; these read GE and SLH. Catalysis depends on Cys345, which acts as the S-methylcysteine intermediate.

Belongs to the radical SAM superfamily. RlmN family. [4Fe-4S] cluster is required as a cofactor.

It localises to the cytoplasm. It catalyses the reaction adenosine(2503) in 23S rRNA + 2 reduced [2Fe-2S]-[ferredoxin] + 2 S-adenosyl-L-methionine = 2-methyladenosine(2503) in 23S rRNA + 5'-deoxyadenosine + L-methionine + 2 oxidized [2Fe-2S]-[ferredoxin] + S-adenosyl-L-homocysteine. It carries out the reaction adenosine(37) in tRNA + 2 reduced [2Fe-2S]-[ferredoxin] + 2 S-adenosyl-L-methionine = 2-methyladenosine(37) in tRNA + 5'-deoxyadenosine + L-methionine + 2 oxidized [2Fe-2S]-[ferredoxin] + S-adenosyl-L-homocysteine. Its function is as follows. Specifically methylates position 2 of adenine 2503 in 23S rRNA and position 2 of adenine 37 in tRNAs. m2A2503 modification seems to play a crucial role in the proofreading step occurring at the peptidyl transferase center and thus would serve to optimize ribosomal fidelity. This chain is Dual-specificity RNA methyltransferase RlmN, found in Pseudomonas syringae pv. syringae (strain B728a).